We begin with the raw amino-acid sequence, 458 residues long: MEASITVLLFAFTKVASSLYYEGSGHSDGEIQTNEVYVESRPLGPYRAPRWCYDLHISDGEATCYSPLGPRYRSTLGTRCRLSCDQGFKLIGQSSVQCLSSRRWSGNGHCRRIQCHVLPPIFYGSYHCSVGVSEGSRCDYSCAPGYMVEGDRSRICMEDGQWSGGEPVCVDLDPPKIQCPVSRMKVAEPEKLTARIFWGNPQVKDSADGVITRVFLRGPEPGSELPEGEHVIRYTAYDRAHNRASCKFIVKVQVRRCPDLTPPLHGYLTCSAAGNNYGATCEYHCEGGYERQGPAARVCQFSQNWAGTPSTCTPMLINVNVNSAGAFIDQFFEKQRLLFISSPSSSDRYYRMQTTALQSSGCGLEQRHVLIVELIGESPREVGRVRNQQLSKELIEELRQVLRISRSYFNMVLIDKHGVDRDRYRQPTASEDIFLFIDTYLLSPRELSQVESNKENCD.

An N-terminal signal peptide occupies residues 1–18; sequence MEASITVLLFAFTKVASS. Sushi domains are found at residues 62–112, 113–171, and 255–314; these read ATCY…HCRR, IQCH…VCVD, and RRCP…TCTP. Disulfide bonds link Cys64–Cys98, Cys84–Cys110, Cys115–Cys156, and Cys142–Cys169. One can recognise an HYR domain in the interval 170–254; that stretch reads VDLDPPKIQC…SCKFIVKVQV (85 aa). Cystine bridges form between Cys257–Cys299 and Cys285–Cys312.

As to quaternary structure, forms homooligomers.

The protein resides in the secreted. Its subcellular location is the cytoplasm. It localises to the cell surface. It is found in the synapse. Its function is as follows. May play a role in angiogenesis, synapse formation, cellular migration and adhesion. This is Sushi repeat-containing protein SRPX2 (srpx2) from Xenopus laevis (African clawed frog).